The following is a 101-amino-acid chain: Large ribosomal subunit protein uL6m (101 aa).

Belongs to the universal ribosomal protein uL6 family.

The protein localises to the mitochondrion. The sequence is that of Large ribosomal subunit protein uL6m (RPL6) from Marchantia polymorpha (Common liverwort).